The sequence spans 119 residues: NADH-quinone oxidoreductase subunit A (119 aa).

3 consecutive transmembrane segments (helical) span residues 7–27 (YPVLLFLLVGTGLGIALVSIG), 63–83 (LVAILFIIFDLETAFLFPWGV), and 88–108 (IGWPGFIAMMIFLLEFLLGFA).

It belongs to the complex I subunit 3 family. In terms of assembly, NDH-1 is composed of 14 different subunits. Subunits NuoA, H, J, K, L, M, N constitute the membrane sector of the complex.

The protein localises to the cell inner membrane. The enzyme catalyses a quinone + NADH + 5 H(+)(in) = a quinol + NAD(+) + 4 H(+)(out). Functionally, NDH-1 shuttles electrons from NADH, via FMN and iron-sulfur (Fe-S) centers, to quinones in the respiratory chain. The immediate electron acceptor for the enzyme in this species is believed to be ubiquinone. Couples the redox reaction to proton translocation (for every two electrons transferred, four hydrogen ions are translocated across the cytoplasmic membrane), and thus conserves the redox energy in a proton gradient. The protein is NADH-quinone oxidoreductase subunit A of Burkholderia ambifaria (strain MC40-6).